A 493-amino-acid polypeptide reads, in one-letter code: N-acetylglucosamine kinase 1 (493 aa).

The Hexokinase domain maps to 27-490; that stretch reads ESSVLSSIVE…SIIGAAIGAA (464 aa). Residues 79 to 221 are hexokinase small subdomain; sequence TGDEHGQYLV…GLTLDVQSIL (143 aa). Residues 222-479 form a hexokinase large subdomain region; the sequence is NDSLAVYSAG…IKVDLKLIEN (258 aa).

This sequence belongs to the hexokinase family. Interacts with histone deacetylase SIR2 under filamentation-inducing conditions.

The protein localises to the cytoplasm. The protein resides in the nucleus. It is found in the mitochondrion. It carries out the reaction N-acetyl-D-glucosamine + ATP = N-acetyl-D-glucosamine 6-phosphate + ADP + H(+). The enzyme catalyses D-mannose + ATP = D-mannose 6-phosphate + ADP + H(+). It catalyses the reaction D-glucose + ATP = D-glucose 6-phosphate + ADP + H(+). The catalysed reaction is D-glucosamine + ATP = D-glucosamine 6-phosphate + ADP + H(+). It participates in carbohydrate metabolism; hexose metabolism. It functions in the pathway carbohydrate degradation; glycolysis; D-glyceraldehyde 3-phosphate and glycerone phosphate from D-glucose: step 1/4. In terms of biological role, component of the N-acetylglucosamine catabolic cascade that phosphorylates N-acetylglucosamine (GlcNAc), and allows the unique ability to utilise GlcNAc as carbon source. Converts GlcNAc to GlcNAc-6-P. Also able to phosphorylate glucose, glucosamine (GlcN), and mannose. Galactose, fructose, N-acetylmannosamine (ManNAc), mannosamine (ManN), galactosamine (GalN), and N-acetylgalactosamine (GalNAc) are not phosphorylated by HXK1. GlcNAc metabolism is closely associated with virulence and morphogenesis, and is involved in the cell wall synthesis. Acts both as a repressor and an activator of genes involved in maintaining cellular homeostasis. Contributes to white-opaque morphological transition and plays a role as a filamentation repressor. The protein is N-acetylglucosamine kinase 1 of Candida albicans (strain SC5314 / ATCC MYA-2876) (Yeast).